Here is a 795-residue protein sequence, read N- to C-terminus: RAS guanyl-releasing protein 1 (795 aa).

Over residues methionine 1–arginine 12 the composition is skewed to basic and acidic residues. The tract at residues methionine 1–alanine 37 is disordered. The 124-residue stretch at leucine 53 to serine 176 folds into the N-terminal Ras-GEF domain. The segment at alanine 57 to tyrosine 110 is ras exchanger motif region; required for transforming activity. At threonine 184 the chain carries Phosphothreonine; by PKC. The Ras-GEF domain maps to glutamate 205–arginine 436. EF-hand domains are found at residues histidine 470–serine 505 and phenylalanine 506–isoleucine 532. Aspartate 483, aspartate 485, aspartate 487, tyrosine 489, and glutamate 494 together coordinate Ca(2+). The Phorbol-ester/DAG-type zinc finger occupies proline 541–cysteine 591. Serine 597 carries the post-translational modification Phosphoserine. The interval threonine 686–serine 694 is suppress the PT region-mediated translocation to plasma membrane. Residues leucine 717–alanine 795 are PT region; mediates the BCR-dependent translocation to plasma membrane. Positions glutamate 738–leucine 779 form a coiled coil.

This sequence belongs to the RASGRP family. As to quaternary structure, homodimer. Forms a signaling complex with DGKZ and HRAS. Interacts with F-actin. Interacts with SKAP1. As to expression, detected in spleen and thymus. Expressed by mature thymocytes and to a lower extent by bone marrow-derived mast cells (at protein level). Detected in B-cells and keratinocytes (at protein level).

The protein localises to the cytoplasm. The protein resides in the cytosol. It localises to the cell membrane. Its subcellular location is the golgi apparatus membrane. It is found in the endoplasmic reticulum membrane. Autoinhibited. Activated by diacylglycerol and calcium binding, which induces a conformational change releasing the autoinhibitory state. Regulated by DGKA. Regulated by DGKZ. Regulated by PLC gamma and F-actin polymerization. Functionally, functions as a calcium- and diacylglycerol (DAG)-regulated nucleotide exchange factor specifically activating Ras through the exchange of bound GDP for GTP. Activates the Erk/MAP kinase cascade. Regulates T-cell/B-cell development, homeostasis and differentiation by coupling T-lymphocyte/B-lymphocyte antigen receptors to Ras. Regulates NK cell cytotoxicity and ITAM-dependent cytokine production by activation of Ras-mediated ERK and JNK pathways. Functions in mast cell degranulation and cytokine secretion, regulating FcERI-evoked allergic responses. May also function in differentiation of other cell types. Proto-oncogene, which promotes T-cell lymphomagenesis when its expression is deregulated. This chain is RAS guanyl-releasing protein 1 (Rasgrp1), found in Mus musculus (Mouse).